Reading from the N-terminus, the 138-residue chain is Putative pre-16S rRNA nuclease (138 aa).

Belongs to the YqgF nuclease family.

Its subcellular location is the cytoplasm. Could be a nuclease involved in processing of the 5'-end of pre-16S rRNA. This is Putative pre-16S rRNA nuclease from Mycoplasma genitalium (strain ATCC 33530 / DSM 19775 / NCTC 10195 / G37) (Mycoplasmoides genitalium).